A 243-amino-acid polypeptide reads, in one-letter code: Uridylate kinase (243 aa).

Lys-12–Gly-15 contributes to the ATP binding site. The segment at Gly-20–Gly-25 is involved in allosteric activation by GTP. The ATP site is built by Gly-55 and Arg-59. UMP-binding positions include Asp-74 and Thr-135–Thr-142. ATP is bound by residues Gln-163, Tyr-169, and Asp-172.

The protein belongs to the UMP kinase family. Homohexamer.

It localises to the cytoplasm. The catalysed reaction is UMP + ATP = UDP + ADP. It participates in pyrimidine metabolism; CTP biosynthesis via de novo pathway; UDP from UMP (UMPK route): step 1/1. Its activity is regulated as follows. Allosterically activated by GTP. Inhibited by UTP. Functionally, catalyzes the reversible phosphorylation of UMP to UDP. This Symbiobacterium thermophilum (strain DSM 24528 / JCM 14929 / IAM 14863 / T) protein is Uridylate kinase.